We begin with the raw amino-acid sequence, 173 residues long: Ribulose bisphosphate carboxylase small subunit, chloroplastic 1 (173 aa).

The transit peptide at 1 to 52 directs the protein to the chloroplast; it reads MMVSTAAVARVRPAQTNMVGAFNGCRSSVAFPATRKANNDLSTLPSSGGRVS.

Belongs to the RuBisCO small chain family. In terms of assembly, heterohexadecamer of 8 large and 8 small subunits.

The protein resides in the plastid. It localises to the chloroplast. Functionally, ruBisCO catalyzes two reactions: the carboxylation of D-ribulose 1,5-bisphosphate, the primary event in carbon dioxide fixation, as well as the oxidative fragmentation of the pentose substrate. Both reactions occur simultaneously and in competition at the same active site. Although the small subunit is not catalytic it is essential for maximal activity. The chain is Ribulose bisphosphate carboxylase small subunit, chloroplastic 1 from Lemna gibba (Swollen duckweed).